Consider the following 118-residue polypeptide: Small ribosomal subunit protein uS13 (118 aa).

It belongs to the universal ribosomal protein uS13 family. As to quaternary structure, part of the 30S ribosomal subunit. Forms a loose heterodimer with protein S19. Forms two bridges to the 50S subunit in the 70S ribosome.

In terms of biological role, located at the top of the head of the 30S subunit, it contacts several helices of the 16S rRNA. In the 70S ribosome it contacts the 23S rRNA (bridge B1a) and protein L5 of the 50S subunit (bridge B1b), connecting the 2 subunits; these bridges are implicated in subunit movement. Contacts the tRNAs in the A and P-sites. The polypeptide is Small ribosomal subunit protein uS13 (Carsonella ruddii (strain PV)).